A 452-amino-acid polypeptide reads, in one-letter code: Ribosomal protein uS12 methylthiotransferase RimO (452 aa).

One can recognise an MTTase N-terminal domain in the interval P8–P123. Residues C17, C53, C82, C154, C158, and C161 each coordinate [4Fe-4S] cluster. The region spanning L140 to R381 is the Radical SAM core domain. Residues Q384 to I452 enclose the TRAM domain.

Belongs to the methylthiotransferase family. RimO subfamily. [4Fe-4S] cluster serves as cofactor.

Its subcellular location is the cytoplasm. The enzyme catalyses L-aspartate(89)-[ribosomal protein uS12]-hydrogen + (sulfur carrier)-SH + AH2 + 2 S-adenosyl-L-methionine = 3-methylsulfanyl-L-aspartate(89)-[ribosomal protein uS12]-hydrogen + (sulfur carrier)-H + 5'-deoxyadenosine + L-methionine + A + S-adenosyl-L-homocysteine + 2 H(+). In terms of biological role, catalyzes the methylthiolation of an aspartic acid residue of ribosomal protein uS12. The sequence is that of Ribosomal protein uS12 methylthiotransferase RimO from Cupriavidus pinatubonensis (strain JMP 134 / LMG 1197) (Cupriavidus necator (strain JMP 134)).